The chain runs to 508 residues: CUGBP Elav-like family member 2 (508 aa).

Necessary for RNA-binding, TNNT2 exon 5 and NMDA R1 exon 21 inclusion regions lie at residues 1–283 (MRCP…LQNL) and 357–508 (LAGM…SKPY). RRM domains lie at 40-123 (IKMF…PADS), 132-212 (RKLF…FADT), and 423-501 (ANLF…LKRS).

Belongs to the CELF/BRUNOL family. As to quaternary structure, interacts with A1CF. In terms of tissue distribution, expressed in frontal cortex. Isoform 1 is expressed in brain and lung. Isoform 2 is expressed in heart, brain, placenta, lung, liver, kidney, skeletal muscle and pancreas. Isoform 4 is expressed in heart, lung, skeletal muscle, kidney and pancreas.

Its subcellular location is the nucleus. The protein localises to the cytoplasm. In terms of biological role, RNA-binding protein implicated in the regulation of several post-transcriptional events. Involved in pre-mRNA alternative splicing, mRNA translation and stability. Mediates exon inclusion and/or exclusion in pre-mRNA that are subject to tissue-specific and developmentally regulated alternative splicing. Specifically activates exon 5 inclusion of TNNT2 in embryonic, but not adult, skeletal muscle. Activates TNNT2 exon 5 inclusion by antagonizing the repressive effect of PTB. Acts both as an activator and as a repressor of a pair of coregulated exons: promotes inclusion of the smooth muscle (SM) exon but exclusion of the non-muscle (NM) exon in actinin pre-mRNAs. Promotes inclusion of exonS 21 and exclusion of exon 5 of the NMDA receptor R1 pre-mRNA. Involved in the apoB RNA editing activity. Increases COX2 mRNA stability and inhibits COX2 mRNA translation in epithelial cells after radiation injury. Modulates the cellular apoptosis program by regulating COX2-mediated prostaglandin E2 (PGE2) expression. Binds to (CUG)n triplet repeats in the 3'-UTR of transcripts such as DMPK. Binds to the muscle-specific splicing enhancer (MSE) intronic sites flanking the TNNT2 alternative exon 5. Binds preferentially to UG-rich sequences, in particular UG repeat and UGUU motifs. Binds to apoB mRNA, specifically to AU-rich sequences located immediately upstream of the edited cytidine. Binds AU-rich sequences in the 3'-UTR of COX2 mRNA. Binds to an intronic RNA element responsible for the silencing of exon 21 splicing. Binds to (CUG)n repeats. May be a specific regulator of miRNA biogenesis. Binds to primary microRNA pri-MIR140 and, with CELF1, negatively regulates the processing to mature miRNA. The sequence is that of CUGBP Elav-like family member 2 (CELF2) from Homo sapiens (Human).